The following is an 85-amino-acid chain: Large ribosomal subunit protein bL27 (85 aa).

The interval 1–21 is disordered; the sequence is MAHKKAGGSTRNGRDSNAQRL. A compositionally biased stretch (polar residues) spans 9–19; that stretch reads STRNGRDSNAQ.

Belongs to the bacterial ribosomal protein bL27 family.

This Pectobacterium atrosepticum (strain SCRI 1043 / ATCC BAA-672) (Erwinia carotovora subsp. atroseptica) protein is Large ribosomal subunit protein bL27.